The following is a 504-amino-acid chain: Probable cytosol aminopeptidase (504 aa).

Mn(2+) contacts are provided by K274 and D279. K286 is a catalytic residue. The Mn(2+) site is built by D297, D356, and E358. The active site involves R360.

It belongs to the peptidase M17 family. Requires Mn(2+) as cofactor.

The protein resides in the cytoplasm. It catalyses the reaction Release of an N-terminal amino acid, Xaa-|-Yaa-, in which Xaa is preferably Leu, but may be other amino acids including Pro although not Arg or Lys, and Yaa may be Pro. Amino acid amides and methyl esters are also readily hydrolyzed, but rates on arylamides are exceedingly low.. The enzyme catalyses Release of an N-terminal amino acid, preferentially leucine, but not glutamic or aspartic acids.. Functionally, presumably involved in the processing and regular turnover of intracellular proteins. Catalyzes the removal of unsubstituted N-terminal amino acids from various peptides. This chain is Probable cytosol aminopeptidase, found in Gloeobacter violaceus (strain ATCC 29082 / PCC 7421).